Here is a 149-residue protein sequence, read N- to C-terminus: Nucleoside diphosphate kinase (149 aa).

Residues K9, F57, R85, T91, R102, and N112 each coordinate ATP. Catalysis depends on H115, which acts as the Pros-phosphohistidine intermediate.

The protein belongs to the NDK family. Mg(2+) serves as cofactor.

The protein localises to the cytoplasm. It catalyses the reaction a 2'-deoxyribonucleoside 5'-diphosphate + ATP = a 2'-deoxyribonucleoside 5'-triphosphate + ADP. It carries out the reaction a ribonucleoside 5'-diphosphate + ATP = a ribonucleoside 5'-triphosphate + ADP. In terms of biological role, major role in the synthesis of nucleoside triphosphates other than ATP. The ATP gamma phosphate is transferred to the NDP beta phosphate via a ping-pong mechanism, using a phosphorylated active-site intermediate. This Methanococcoides burtonii (strain DSM 6242 / NBRC 107633 / OCM 468 / ACE-M) protein is Nucleoside diphosphate kinase.